Reading from the N-terminus, the 202-residue chain is Small ribosomal subunit protein uS4 (202 aa).

The segment covering 1 to 13 (MSRYRGPRLRVTR) has biased composition (basic residues). Residues 1-42 (MSRYRGPRLRVTRRLGELPGLTRKASKKSNPPGQHGQARRKR) are disordered. Residues 90-152 (NRLDNVCFRL…KASKKLVEGN (63 aa)) enclose the S4 RNA-binding domain.

The protein belongs to the universal ribosomal protein uS4 family. As to quaternary structure, part of the 30S ribosomal subunit. Contacts protein S5. The interaction surface between S4 and S5 is involved in control of translational fidelity.

One of the primary rRNA binding proteins, it binds directly to 16S rRNA where it nucleates assembly of the body of the 30S subunit. In terms of biological role, with S5 and S12 plays an important role in translational accuracy. This is Small ribosomal subunit protein uS4 from Prochlorococcus marinus (strain AS9601).